Here is a 175-residue protein sequence, read N- to C-terminus: Zinc finger protein ZAT18 (175 aa).

2 consecutive C2H2-type zinc fingers follow at residues 49–71 (FECKTCNRKFDSFQALGGHRASH) and 93–115 (HKCTICDQMFGTGQALGGHMRKH). The Nuclear localization signal motif lies at 71 to 78 (HKKPKLIV). The EAR-like (transcriptional repression) signature appears at 146–152 (LDLNLTP).

In terms of tissue distribution, mostly expressed in stems, siliques and leaves, and, to a lower extent, in cotyledons, hypocotyls and roots.

Its subcellular location is the nucleus. Transcription factor involved in stress responses. Positive regulator of the jasmonic acid (JA)- mediated signaling pathway. Triggers the up-regulation of LOX3, VSP2, PAL1 and PAL2 in a JA-dependent manner. Promotes drought and osmotic stress tolerance by preventing reactive oxygen species (ROS) production (e.g. H(2)O(2)). The sequence is that of Zinc finger protein ZAT18 from Arabidopsis thaliana (Mouse-ear cress).